We begin with the raw amino-acid sequence, 205 residues long: uncharacterized protein (205 aa).

Residues 5–27 (IIVLFIIHFIMINENVFIALLHY) form a helical membrane-spanning segment.

The protein to T.maritima TM1570.

The protein localises to the membrane. This is an uncharacterized protein from Aquifex aeolicus (strain VF5).